Here is a 132-residue protein sequence, read N- to C-terminus: Secreted RxLR effector protein RXLR-C22 (132 aa).

An N-terminal signal peptide occupies residues 1-21 (MRSLVWAVIATLIVLTPFSEA). A RxLR-dEER motif is present at residues 56–74 (RKLQSDSVKKGDSTGLEER). N-linked (GlcNAc...) asparagine glycosylation occurs at N116.

Belongs to the RxLR effector family.

The protein localises to the secreted. It is found in the host Golgi apparatus. In terms of biological role, secreted effector that does not suppress pattern-triggered immunity (PTI) in plant host. The protein is Secreted RxLR effector protein RXLR-C22 of Plasmopara halstedii (Downy mildew of sunflower).